The sequence spans 169 residues: PTS system glucose-specific EIIA component (169 aa).

One can recognise a PTS EIIA type-1 domain in the interval 39–143 (DVVFAEKIVG…STLTPVVISN (105 aa)). 2 residues coordinate Zn(2+): histidine 76 and histidine 91. The Tele-phosphohistidine intermediate; for EIIA activity role is filled by histidine 91. Histidine 91 is subject to Phosphohistidine; by HPr.

As to quaternary structure, heterodimer with glycerol kinase (glpk). It depends on Zn(2+) as a cofactor.

Its subcellular location is the cytoplasm. In terms of biological role, the phosphoenolpyruvate-dependent sugar phosphotransferase system (sugar PTS), a major carbohydrate active transport system, catalyzes the phosphorylation of incoming sugar substrates concomitantly with their translocation across the cell membrane. The enzyme II complex composed of PtsG and Crr is involved in glucose transport. The protein is PTS system glucose-specific EIIA component (crr) of Salmonella typhi.